Here is a 393-residue protein sequence, read N- to C-terminus: Probable N-acetyl-LL-diaminopimelate aminotransferase (393 aa).

At Lys-231 the chain carries N6-(pyridoxal phosphate)lysine.

The protein belongs to the class-I pyridoxal-phosphate-dependent aminotransferase family. Homodimer. It depends on pyridoxal 5'-phosphate as a cofactor.

The protein localises to the cytoplasm. It carries out the reaction N-acetyl-(2S,6S)-2,6-diaminopimelate + 2-oxoglutarate = L-2-acetamido-6-oxoheptanedioate + L-glutamate. It functions in the pathway amino-acid biosynthesis; L-lysine biosynthesis via DAP pathway; LL-2,6-diaminopimelate from (S)-tetrahydrodipicolinate (acetylase route): step 2/3. In terms of biological role, essential for murein biosynthesis. Probably catalyzes the conversion of L-2-acetamido-6-oxopimelate to N-acetyl-LL-2,6-diaminopimelate. The chain is Probable N-acetyl-LL-diaminopimelate aminotransferase from Bacillus subtilis (strain 168).